The primary structure comprises 336 residues: Nuclear egress protein 2 (336 aa).

Topologically, residues 1–315 are perinuclear space; the sequence is MASPEERLLD…AWRYSWRATP (315 aa). Disordered stretches follow at residues 193-221 and 277-297; these read RSGQVEDTGARVTGGGGPRPGVTHSGCLG and RTRETRRMRGSHSRVEHVPPE. Residues 277-288 are compositionally biased toward basic residues; that stretch reads RTRETRRMRGSH. A helical membrane pass occupies residues 316-333; the sequence is YLARVLAVTAVALLLMFL. The Nuclear portion of the chain corresponds to 334 to 336; the sequence is RWT.

It belongs to the herpesviridae NEC2 protein family. In terms of assembly, forms a heterodimeric viral nuclear egress complex (NEC) with NEC1. Interacts with host IKBKE; this interaction inhibits host IKBKE kinase activity and IRF3 nuclear translocation. Post-translationally, phosphorylated.

The protein resides in the host nucleus inner membrane. It is found in the host cytoplasm. Its subcellular location is the host perinuclear region. In terms of biological role, plays an essential role in virion nuclear egress, the first step of virion release from infected cell. Within the host nucleus, NEC1 interacts with the newly formed capsid through the vertexes and directs it to the inner nuclear membrane by associating with NEC2. Induces the budding of the capsid at the inner nuclear membrane as well as its envelopment into the perinuclear space. There, the NEC1/NEC2 complex promotes the fusion of the enveloped capsid with the outer nuclear membrane and the subsequent release of the viral capsid into the cytoplasm where it will reach the secondary budding sites in the host Golgi or trans-Golgi network. Inhibits host IKBKE and IRF3, thereby impairing type I IFN signaling. This is Nuclear egress protein 2 from Homo sapiens (Human).